The following is a 257-amino-acid chain: Hydroxyethylthiazole kinase (257 aa).

Position 49 (M49) interacts with substrate. ATP contacts are provided by R124 and T170. G197 provides a ligand contact to substrate.

It belongs to the Thz kinase family. Requires Mg(2+) as cofactor.

It carries out the reaction 5-(2-hydroxyethyl)-4-methylthiazole + ATP = 4-methyl-5-(2-phosphooxyethyl)-thiazole + ADP + H(+). Its pathway is cofactor biosynthesis; thiamine diphosphate biosynthesis; 4-methyl-5-(2-phosphoethyl)-thiazole from 5-(2-hydroxyethyl)-4-methylthiazole: step 1/1. Catalyzes the phosphorylation of the hydroxyl group of 4-methyl-5-beta-hydroxyethylthiazole (THZ). In Klebsiella pneumoniae (strain 342), this protein is Hydroxyethylthiazole kinase.